The chain runs to 60 residues: Metallothionein-like protein EMB30 (60 aa).

It belongs to the metallothionein superfamily. Type 15 family.

Metallothioneins have a high content of cysteine residues that bind various heavy metals. This chain is Metallothionein-like protein EMB30 (EMB30), found in Picea glauca (White spruce).